A 201-amino-acid chain; its full sequence is MPVYLGKRAPDFTANTTRGVISLSDYKNKWVLLFSHPADFTPICTTEFIEFSRRYNDFKELNVELIGLSVDSLQSHIEWLKDIYEKFGIEIQFPVIADINKEIAREYNLIDENAGNTVRGVFIIDPNQTVRWMIYYPAETGRNIDEILRSVKALQANWSRKIATPVNWRPGDKGILPPPSTLEDALQRIREGNKTWYIKTE.

Residues 3–156 form the Thioredoxin domain; that stretch reads VYLGKRAPDF…ILRSVKALQA (154 aa). The active-site Cysteine sulfenic acid (-SOH) intermediate is the cysteine 44. A substrate-binding site is contributed by arginine 119.

Belongs to the peroxiredoxin family. Prx6 subfamily. Homodecamer. Pentamer of dimers that assemble into a ring structure.

The protein localises to the cytoplasm. The enzyme catalyses a hydroperoxide + [thioredoxin]-dithiol = an alcohol + [thioredoxin]-disulfide + H2O. Functionally, thiol-specific peroxidase that catalyzes the reduction of hydrogen peroxide and organic hydroperoxides to water and alcohols, respectively. Plays a role in cell protection against oxidative stress by detoxifying peroxides. This is Peroxiredoxin 2 from Picrophilus torridus (strain ATCC 700027 / DSM 9790 / JCM 10055 / NBRC 100828 / KAW 2/3).